Reading from the N-terminus, the 1323-residue chain is Receptor tyrosine-protein kinase let-23 (1323 aa).

Residues 1–20 (MRYPPSIGSILLIIPIFLTF) form the signal peptide. Residues 21-818 (FGNSNAQLWK…DIASRQRKTR (798 aa)) are Extracellular-facing. Asn91 and Asn169 each carry an N-linked (GlcNAc...) asparagine glycan. 11 cysteine pairs are disulfide-bonded: Cys220–Cys228, Cys224–Cys236, Cys244–Cys251, Cys248–Cys262, Cys263–Cys271, Cys267–Cys279, Cys282–Cys291, Cys295–Cys322, Cys326–Cys337, Cys341–Cys356, and Cys359–Cys364. An N-linked (GlcNAc...) asparagine glycan is attached at Asn255. The N-linked (GlcNAc...) asparagine glycan is linked to Asn376. 20 cysteine pairs are disulfide-bonded: Cys520/Cys529, Cys524/Cys537, Cys540/Cys549, Cys553/Cys567, Cys570/Cys577, Cys574/Cys585, Cys588/Cys604, Cys608/Cys620, Cys623/Cys632, Cys627/Cys644, Cys647/Cys660, Cys670/Cys693, Cys696/Cys703, Cys700/Cys715, Cys717/Cys731, Cys735/Cys750, Cys753/Cys763, Cys757/Cys771, Cys774/Cys787, and Cys791/Cys805. N-linked (GlcNAc...) asparagine glycosylation occurs at Asn561. An N-linked (GlcNAc...) asparagine glycan is attached at Asn655. The N-linked (GlcNAc...) asparagine glycan is linked to Asn746. N-linked (GlcNAc...) asparagine glycosylation is present at Asn776. A helical transmembrane segment spans residues 819–839 (MVIIGSVLFGFAVMFLFILLV). Residues 840-1323 (YWRCQRIGKK…EEVSQKETCL (484 aa)) are Cytoplasmic-facing. The Protein kinase domain occupies 885–1152 (TKLDKKLGAG…EFCKVPQLFL (268 aa)). Residues 891–899 (LGAGAFGTV) and Lys919 contribute to the ATP site. Asp1010 (proton acceptor) is an active-site residue. The span at 1265-1289 (GQTELSPSNGDYYNQPNTPSSSSGY) shows a compositional bias: polar residues. Residues 1265 to 1323 (GQTELSPSNGDYYNQPNTPSSSSGYYNEPHLKTKKPETSEEAEAVQYENEEVSQKETCL) are disordered. The span at 1293–1302 (PHLKTKKPET) shows a compositional bias: basic and acidic residues. Residues 1303 to 1315 (SEEAEAVQYENEE) are compositionally biased toward acidic residues.

Belongs to the protein kinase superfamily. Tyr protein kinase family. EGF receptor subfamily. As to expression, expressed in vulval precursor cells (at protein level). Expressed in ALA neurons, 2 ventral head neurons, a single neuron in the tail, pharyngeal-intestinal valve and posterior arcade epithelial cells.

The protein localises to the apical cell membrane. It localises to the basolateral cell membrane. It carries out the reaction L-tyrosyl-[protein] + ATP = O-phospho-L-tyrosyl-[protein] + ADP + H(+). Its function is as follows. Tyrosine-protein kinase receptor which, upon binding ligand lin-3, activates 2 signaling cascades: the let-60/Ras and MAP kinase signaling pathway and the let-60-independent phospholipase C-mediated Ca(2+) signaling pathway. Each pathway regulates distinct functions. By activating let-60/Ras, regulates larval development, induction of vulva cell precursors during vulva development, male spicule formation and posterior development of the epidermis. Probably by activating phospholipase plc-3 and inositol 1,4,5-trisphosphate receptor itr-1 signaling cascade downstream of ligand lin-3, plays a role in ovulation by promoting ovulatory gonadal sheath cell contractions. Probably by regulating neuronal transmission in ALA neurons, mediates, independently of let-60/Ras, the decrease in pharyngeal pumping and locomotion during the quiescent state that precedes each larval molt, downstream of lin-3 and upstream of plc-3. The sequence is that of Receptor tyrosine-protein kinase let-23 from Caenorhabditis elegans.